A 357-amino-acid chain; its full sequence is UPF0283 membrane protein BMEI0952 (357 aa).

The tract at residues 1-36 (MSDKTPRKPTAFRLEQPARVSAASEQEEPRRPRAVK) is disordered. Residues 27–36 (EEPRRPRAVK) are compositionally biased toward basic and acidic residues. The next 2 helical transmembrane spans lie at 78-98 (ILFG…TEDL) and 109-129 (LGWT…AIIL).

This sequence belongs to the UPF0283 family.

The protein localises to the cell inner membrane. The polypeptide is UPF0283 membrane protein BMEI0952 (Brucella melitensis biotype 1 (strain ATCC 23456 / CCUG 17765 / NCTC 10094 / 16M)).